The following is a 121-amino-acid chain: Phosphoribosyl-AMP cyclohydrolase (121 aa).

Residue Asp-76 coordinates Mg(2+). Residue Cys-77 coordinates Zn(2+). The Mg(2+) site is built by Asp-78 and Asp-80. Residues Cys-93 and Cys-100 each contribute to the Zn(2+) site.

This sequence belongs to the PRA-CH family. In terms of assembly, homodimer. Requires Mg(2+) as cofactor. The cofactor is Zn(2+).

Its subcellular location is the cytoplasm. The enzyme catalyses 1-(5-phospho-beta-D-ribosyl)-5'-AMP + H2O = 1-(5-phospho-beta-D-ribosyl)-5-[(5-phospho-beta-D-ribosylamino)methylideneamino]imidazole-4-carboxamide. It participates in amino-acid biosynthesis; L-histidine biosynthesis; L-histidine from 5-phospho-alpha-D-ribose 1-diphosphate: step 3/9. Its function is as follows. Catalyzes the hydrolysis of the adenine ring of phosphoribosyl-AMP. In Methanococcoides burtonii (strain DSM 6242 / NBRC 107633 / OCM 468 / ACE-M), this protein is Phosphoribosyl-AMP cyclohydrolase.